Reading from the N-terminus, the 348-residue chain is Glycerol-1-phosphate dehydrogenase [NAD(P)+] (348 aa).

Residues Gly94–Asp98 and Thr116–Ser119 each bind NAD(+). Asp121 provides a ligand contact to substrate. NAD(+) is bound at residue Ser125. Asp168 is a substrate binding site. The Zn(2+) site is built by Asp168 and His248. His252 contributes to the substrate binding site. A Zn(2+)-binding site is contributed by His264.

It belongs to the glycerol-1-phosphate dehydrogenase family. The cofactor is Zn(2+).

It is found in the cytoplasm. The catalysed reaction is sn-glycerol 1-phosphate + NAD(+) = dihydroxyacetone phosphate + NADH + H(+). It catalyses the reaction sn-glycerol 1-phosphate + NADP(+) = dihydroxyacetone phosphate + NADPH + H(+). It functions in the pathway membrane lipid metabolism; glycerophospholipid metabolism. Its function is as follows. Catalyzes the NAD(P)H-dependent reduction of dihydroxyacetonephosphate (DHAP or glycerone phosphate) to glycerol 1-phosphate (G1P). The G1P thus generated is used as the glycerophosphate backbone of phospholipids in the cellular membranes of Archaea. The chain is Glycerol-1-phosphate dehydrogenase [NAD(P)+] from Haloquadratum walsbyi (strain DSM 16790 / HBSQ001).